Reading from the N-terminus, the 639-residue chain is 3-oxocholoyl-CoA 4-desaturase (639 aa).

Gln101 contacts FMN. His155 to His158 serves as a coordination point for substrate. Tyr160 functions as the Proton donor in the catalytic mechanism. FMN contacts are provided by residues Arg208, Arg286, and Gly308 to Arg309. Residues Cys332 and Cys335 each coordinate [4Fe-4S] cluster. Gln337 contacts FAD. Cys339 and Cys353 together coordinate [4Fe-4S] cluster. Positions 383, 402, 410, 420, and 447 each coordinate FAD.

This sequence in the N-terminal section; belongs to the NADH:flavin oxidoreductase/NADH oxidase family. FMN serves as cofactor. The cofactor is FAD. [4Fe-4S] cluster is required as a cofactor.

It catalyses the reaction 7alpha,12alpha-dihydroxy-3-oxochol-24-oyl-CoA + NAD(+) = 7alpha,12alpha-dihydroxy-3-oxochol-4-en-24-oyl-CoA + NADH + H(+). It carries out the reaction 7alpha-hydroxy-3-oxochol-24-oyl-CoA + NAD(+) = 7alpha-hydroxy-3-oxochol-4-en-24-oyl-CoA + NADH + H(+). The protein operates within lipid metabolism; bile acid degradation. Stereo-specific NAD(H)-dependent 3-oxo-delta4-cholenoic acid oxidoreductase involved in bile acid 7alpha-dehydroxylation. The protein is 3-oxocholoyl-CoA 4-desaturase of Clostridium scindens (strain JCM 10418 / VPI 12708).